The chain runs to 329 residues: Cytosolic Fe-S cluster assembly factor NBP35 (329 aa).

Residues 1 to 33 (MAPSQVEDISKTELETPEHCPGPESEQAGKEDA) form a disordered region. The segment covering 8–18 (DISKTELETPE) has biased composition (basic and acidic residues). [4Fe-4S] cluster contacts are provided by C20, C34, C37, and C43. 74–81 (GKGGVGKS) serves as a coordination point for ATP. Residues C248 and C251 each contribute to the [4Fe-4S] cluster site.

Belongs to the Mrp/NBP35 ATP-binding proteins family. NUBP1/NBP35 subfamily. As to quaternary structure, heterotetramer of 2 NBP35 and 2 CFD1 chains. [4Fe-4S] cluster is required as a cofactor.

The protein resides in the cytoplasm. It is found in the nucleus. Component of the cytosolic iron-sulfur (Fe/S) protein assembly (CIA) machinery. Required for maturation of extramitochondrial Fe-S proteins. The NBP35-CFD1 heterotetramer forms a Fe-S scaffold complex, mediating the de novo assembly of an Fe-S cluster and its transfer to target apoproteins. Required for biogenesis and export of both ribosomal subunits, which may reflect a role in assembly of the Fe/S clusters in RLI1, a protein which performs rRNA processing and ribosome export. The sequence is that of Cytosolic Fe-S cluster assembly factor NBP35 from Debaryomyces hansenii (strain ATCC 36239 / CBS 767 / BCRC 21394 / JCM 1990 / NBRC 0083 / IGC 2968) (Yeast).